The sequence spans 69 residues: MILLVALLSGLGLFLGVLAGLAGLILGSIFVVSPFVLLSAGGLALQVLNFLLLFISTIAGGFLGLLSFI.

2 helical membrane-spanning segments follow: residues 7–29 and 44–66; these read LLSG…LGSI and ALQV…LGLL.

Its subcellular location is the cell membrane. This is an uncharacterized protein from Archaeoglobus fulgidus (strain ATCC 49558 / DSM 4304 / JCM 9628 / NBRC 100126 / VC-16).